The sequence spans 488 residues: Bile acid receptor (488 aa).

A Glycyl lysine isopeptide (Lys-Gly) (interchain with G-Cter in SUMO1) cross-link involves residue K133. A DNA-binding region (nuclear receptor) is located at residues 135 to 210 (DELCVVCGDR…MGMLAECMYT (76 aa)). Residues 138–158 (CVVCGDRASGYHYNALTCEGC) form an NR C4-type zinc finger. A phosphoserine; by PKC/PRKCA mark is found at S146 and S165. The residue at position 168 (K168) is an N6-acetyllysine; by EP300. Residues 174 to 198 (CKNGGNCVMDMYMRRKCQECRLRKC) form an NR C4-type zinc finger. K221 is modified (N6-methyllysine; by SETD7). At K228 the chain carries N6-acetyllysine; by EP300. The 225-residue stretch at 264-488 (DQQTLLDYIM…PLLCEIWDVQ (225 aa)) folds into the NR LBD domain. K291 participates in a covalent cross-link: Glycyl lysine isopeptide (Lys-Gly) (interchain with G-Cter in SUMO1). The chenodeoxycholate site is built by R347, Y377, and Y385. Phosphothreonine; by PKC/PRKCZ is present on T458. H463 is a binding site for chenodeoxycholate.

Belongs to the nuclear hormone receptor family. NR1 subfamily. As to quaternary structure, heterodimer with RXRA; the heterodimerization enhances the binding affinity for LXXLL motifs from coactivators. Binds DNA predominantly as a heterodimer with RXRA. After activation by agonist binding interacts with coactivators. Interacts with PPARGC1A, SMARCA4 and EP300. Interacts with NCOA1, NCOA2, CARM1, SETD7, PRMT1, GPS2, SMARCA4 and MED1. Interacts with XRCC5 and XRCC6; decreasing NR1H4/FXR transactivation activity towards ABCB11/BSEP. Interacts with PAGR1 and NCOA6; indicative for an association with an MLL2/MLL3 complex (ASCOM). Interacts with NR5A2. In terms of processing, acetylated by EP300. Lys-228 as is the major acetylation site for EP300; the dynamicly regulated acetylation inhibits heterodimerization with RXRA and transactivation activity. Deacetylated by SIRT1. Elevated acetylation levels are found in metabolic disease states (mouse models of obesity and type II diabetes). Methylation may increase transactivation of target genes. Post-translationally, phosphorylation by PKC/PRKCA increases transactivation activity by promoting association with PPARGC1A. In terms of processing, sumoylated upon ligand binding. In terms of tissue distribution, expressed in liver and kidney. Expressed in pancreatic beta cells and macrophages. Expressed in the villus epithelium in adult ileum, with highest expression in the intervillus regions. Expression in colon is reduced by inflammation.

Its subcellular location is the nucleus. In terms of biological role, ligand-activated transcription factor. Receptor for bile acids (BAs) such as chenodeoxycholic acid (CDCA), lithocholic acid, deoxycholic acid (DCA) and allocholic acid (ACA). Plays a essential role in BA homeostasis through the regulation of genes involved in BA synthesis, conjugation and enterohepatic circulation. Also regulates lipid and glucose homeostasis and is involved in innate immune response. The FXR-RXR heterodimer binds predominantly to farnesoid X receptor response elements (FXREs) containing two inverted repeats of the consensus sequence 5'-AGGTCA-3' in which the monomers are spaced by 1 nucleotide (IR-1) but also to tandem repeat DR1 sites with lower affinity, and can be activated by either FXR or RXR-specific ligands. It is proposed that monomeric nuclear receptors such as NR5A2/LRH-1 bound to coregulatory nuclear responsive element (NRE) halfsites located in close proximity to FXREs modulate transcriptional activity. In the liver activates transcription of the corepressor NR0B2 thereby indirectly inhibiting CYP7A1 and CYP8B1 (involved in BA synthesis) implicating at least in part histone demethylase KDM1A resulting in epigenomic repression, and SLC10A1/NTCP (involved in hepatic uptake of conjugated BAs). Activates transcription of the repressor MAFG (involved in regulation of BA synthesis). Activates transcription of SLC27A5/BACS and BAAT (involved in BA conjugation), ABCB11/BSEP (involved in bile salt export) by directly recruiting histone methyltransferase CARM1, and ABCC2/MRP2 (involved in secretion of conjugated BAs) and ABCB4 (involved in secretion of phosphatidylcholine in the small intestine). In ileal enterocytes activates FABP6/IBABP (involved in cytosolic transport), SLC51A/OSTA and SLC51B/OSTB (involved in secretion of conjugated BAs to the portal blood), and repressor NR0B2/SHP thereby indirectly inhibiting SLC10A2/ASBT (involved in BA uptake). In the intestine activates FGF15 expression and secretion leading to hepatic CYP7A1 repression; the function also involves the coordinated induction of hepatic KLB/beta-klotho expression. Transcriptional activation of FABP6/IBAP and SCD1 but not of ABCB11 is isoform-specific. Regulates transcription of liver UGT2B4 and SULT2A1 involved in BA detoxification; binding to the UGT2B4 promoter seems to imply a monomeric transactivation independent of RXRA. Modulates lipid homeostasis by activating liver NR0B2/SHP-mediated repression of SREBF1 isoform SREBP-1C (involved in de novo lipogenesis), expression of PLTP (involved in HDL formation), SCARB1 (involved in HDL hepatic uptake), APOE, APOC1, APOC4, VLDLR and SDC1 (involved in the hepatic uptake of LDL and IDL remnants), and inhibiting expression of MTTP (involved in VLDL assembly). Increases expression of APOC2 (promoting lipoprotein lipase activity implicated in triglyceride clearance). Transrepresses APOA1 probably involving a monomeric competition with NR2A1 for binding to a DR1 element. Also reduces triglyceride clearance by inhibiting expression of ANGPTL3 and APOC3 (both involved in inhibition of lipoprotein lipase). Involved in glucose homeostasis by modulating hepatic gluconeogenesis through activation of NR0B2/SHP-mediated repression of respective genes. Modulates glycogen synthesis (inducing phosphorylation of glycogen synthase kinase-3). Modulates glucose-stimulated insulin secretion and is involved in insulin resistance. Involved in intestinal innate immunity. Plays a role in protecting the distal small intestine against bacterial overgrowth and preservation of the epithelial barrier. Down-regulates inflammatory cytokine expression in several types of immune cells including macrophages and mononuclear cells. Mediates transrepression of TLR4-induced cytokine expression; the function seems to require its sumoylation and prevents N-CoR nuclear receptor corepressor clearance from target genes such as IL1B and NOS2. Involved in the TLR9-mediated protective mechanism in intestinal inflammation. Plays a anti-inflammatory role in liver inflammation; proposed to inhibit pro-inflammatory (but not antiapoptotic) NF-kappa-B signaling. Its function is as follows. Activates transcription of IBAP and SDC1. The sequence is that of Bile acid receptor (Nr1h4) from Mus musculus (Mouse).